We begin with the raw amino-acid sequence, 119 residues long: UPF0231 protein YPTB0717 (119 aa).

The protein belongs to the UPF0231 family.

The sequence is that of UPF0231 protein YPTB0717 from Yersinia pseudotuberculosis serotype I (strain IP32953).